Here is a 172-residue protein sequence, read N- to C-terminus: Signal peptidase complex catalytic subunit SEC11 (172 aa).

The Cytoplasmic segment spans residues 1–14 (MLSSLGNPRQAATQ). Residues 15–35 (LLNFALILSTAFMMWKGLSVA) form a helical; Signal-anchor for type II membrane protein membrane-spanning segment. Topologically, residues 36–172 (TDSPSPIVVV…MGLMVVLQRE (137 aa)) are lumenal. Residues Ser-49, His-90, and Asp-115 each act as charge relay system in the active site. The interval 158 to 169 (AMLGIMGLMVVL) is C-terminal short (CTS) helix.

It belongs to the peptidase S26B family. In terms of assembly, component of the signal peptidase complex (SPC) composed of a catalytic subunit SEC11 and three accessory subunits SPC1, SPC2 and SPC3. The complex induces a local thinning of the ER membrane which is used to measure the length of the signal peptide (SP) h-region of protein substrates. This ensures the selectivity of the complex towards h-regions shorter than 18-20 amino acids. SPC associates with the translocon complex.

The protein resides in the endoplasmic reticulum membrane. It carries out the reaction Cleavage of hydrophobic, N-terminal signal or leader sequences from secreted and periplasmic proteins.. Functionally, catalytic component of the signal peptidase complex (SPC) which catalyzes the cleavage of N-terminal signal sequences from nascent proteins as they are translocated into the lumen of the endoplasmic reticulum. Specifically cleaves N-terminal signal peptides that contain a hydrophobic alpha-helix (h-region) shorter than 18-20 amino acids. This chain is Signal peptidase complex catalytic subunit SEC11 (SEC11), found in Pyricularia oryzae (strain 70-15 / ATCC MYA-4617 / FGSC 8958) (Rice blast fungus).